The sequence spans 194 residues: Adenylate kinase (194 aa).

Residue 12–17 coordinates ATP; that stretch reads GSGKTT. An NMP region spans residues 34–63; sequence STGDLLREEVKKGTPLGATIASFIDNGQLV. Residues threonine 35, arginine 40, 61–63, 88–91, and glutamine 95 each bind AMP; these read QLV and GFPR. The LID stretch occupies residues 130 to 136; it reads GRARGAD. Arginine 131 contacts ATP. Residues arginine 133 and arginine 145 each coordinate AMP. Arginine 173 is an ATP binding site.

It belongs to the adenylate kinase family. Monomer.

It is found in the cytoplasm. The catalysed reaction is AMP + ATP = 2 ADP. The protein operates within purine metabolism; AMP biosynthesis via salvage pathway; AMP from ADP: step 1/1. Catalyzes the reversible transfer of the terminal phosphate group between ATP and AMP. Plays an important role in cellular energy homeostasis and in adenine nucleotide metabolism. The protein is Adenylate kinase of Nitratiruptor sp. (strain SB155-2).